A 139-amino-acid chain; its full sequence is Heavy metal-associated isoprenylated plant protein 13 (139 aa).

One can recognise an HMA domain in the interval Pro-3–Glu-70. The segment at Glu-70–Ala-94 is disordered. Residues Lys-73–Ala-85 are compositionally biased toward basic and acidic residues. At Cys-136 the chain carries Cysteine methyl ester. Cys-136 carries the S-farnesyl cysteine lipid modification. A propeptide spans Val-137–Met-139 (removed in mature form).

Belongs to the HIPP family.

Probable heavy-metal-binding protein. The protein is Heavy metal-associated isoprenylated plant protein 13 of Arabidopsis thaliana (Mouse-ear cress).